Consider the following 838-residue polypeptide: Outer membrane usher protein YraJ (838 aa).

Residues 1–40 (MPQRHHQGHKRTPKQLALIIKRCLPMVLTGSGMLCTTANA) form the signal peptide. Residues cysteine 815 and cysteine 837 are joined by a disulfide bond.

This sequence belongs to the fimbrial export usher family.

It is found in the cell outer membrane. Its function is as follows. Part of the yraHIJK fimbrial operon. Could contribute to adhesion to various surfaces in specific environmental niches. Increases adhesion to eukaryotic T24 bladder epithelial cells in the absence of fim operon. Probably involved in the export and assembly of fimbrial subunits across the outer membrane. This Escherichia coli (strain K12) protein is Outer membrane usher protein YraJ (yraJ).